The chain runs to 245 residues: Probable phosphatase YcdX (245 aa).

Positions 7, 9, 15, 40, 73, 101, 131, 192, and 194 each coordinate Zn(2+).

This sequence belongs to the PHP family. Homotrimer. It depends on Zn(2+) as a cofactor.

The sequence is that of Probable phosphatase YcdX from Shigella dysenteriae serotype 1 (strain Sd197).